Here is a 31-residue protein sequence, read N- to C-terminus: Hemocyanin subunit 1 (31 aa).

The protein belongs to the tyrosinase family. Hemocyanin subfamily. In terms of tissue distribution, hemolymph.

It is found in the secreted. It localises to the extracellular space. Its function is as follows. Hemocyanins are copper-containing oxygen carriers occurring freely dissolved in the hemolymph of many mollusks and arthropods. This Homarus americanus (American lobster) protein is Hemocyanin subunit 1.